Reading from the N-terminus, the 21-residue chain is Phospholipase A2 crotoxin basic chain (21 aa).

Belongs to the phospholipase A2 family. Group II subfamily. Ca(2+) serves as cofactor. As to expression, expressed by the venom gland.

Its subcellular location is the secreted. The enzyme catalyses a 1,2-diacyl-sn-glycero-3-phosphocholine + H2O = a 1-acyl-sn-glycero-3-phosphocholine + a fatty acid + H(+). Functionally, snake venom phospholipase A2 (PLA2) that induces a conspicuous local myotoxic effect and moderate footpad edema. In vitro, it shows anticoagulant effects and is not cytotoxic on myoblast but is able to lyse myotubes. PLA2 catalyzes the calcium-dependent hydrolysis of the 2-acyl groups in 3-sn-phosphoglycerides. The sequence is that of Phospholipase A2 crotoxin basic chain from Crotalus durissus cumanensis (South American rattlesnake).